The chain runs to 455 residues: Tryptophan dimethylallyltransferase (455 aa).

L-tryptophan contacts are provided by residues 79-80 (VL) and glutamate 88. 3 residues coordinate substrate: arginine 99, lysine 186, and tyrosine 188. 2 residues coordinate L-tryptophan: tyrosine 190 and arginine 256. The substrate site is built by arginine 269, lysine 271, tyrosine 273, glutamine 355, tyrosine 357, tyrosine 421, and tyrosine 425.

It belongs to the tryptophan dimethylallyltransferase family. As to quaternary structure, homodimer.

It catalyses the reaction L-tryptophan + dimethylallyl diphosphate = 4-(3-methylbut-2-enyl)-L-tryptophan + diphosphate. Its pathway is alkaloid biosynthesis; ergot alkaloid biosynthesis. Tryptophan dimethylallyltransferase; part of the gene cluster that mediates the biosynthesis of fungal ergot alkaloid. DmaW catalyzes the first step of ergot alkaloid biosynthesis by condensing dimethylallyl diphosphate (DMAP) and tryptophan to form 4-dimethylallyl-L-tryptophan. The second step is catalyzed by the methyltransferase easF that methylates 4-dimethylallyl-L-tryptophan in the presence of S-adenosyl-L-methionine, resulting in the formation of 4-dimethylallyl-L-abrine. The catalase easC and the FAD-dependent oxidoreductase easE then transform 4-dimethylallyl-L-abrine to chanoclavine-I which is further oxidized by easD in the presence of NAD(+), resulting in the formation of chanoclavine-I aldehyde. Agroclavine dehydrogenase easG then mediates the conversion of chanoclavine-I aldehyde to agroclavine via a non-enzymatic adduct reaction: the substrate is an iminium intermediate that is formed spontaneously from chanoclavine-I aldehyde in the presence of glutathione. Further conversion of agroclavine to paspalic acid is a two-step process involving oxidation of agroclavine to elymoclavine and of elymoclavine to paspalic acid, the second step being performed by the elymoclavine oxidase cloA. However, cloA does not encode a functional enzyme indicating that C.fusiformis terminates its ergot alkaloid pathway at elymoclavine. This Claviceps fusiformis (Ergot fungus) protein is Tryptophan dimethylallyltransferase.